A 129-amino-acid polypeptide reads, in one-letter code: Lysozyme C (129 aa).

The 129-residue stretch at 1 to 129 (KVYGRCELAA…VSVWTRGCRL (129 aa)) folds into the C-type lysozyme domain. Cystine bridges form between C6–C127, C30–C115, C64–C80, and C76–C94. Residues E35 and D52 contribute to the active site.

It belongs to the glycosyl hydrolase 22 family. In terms of assembly, monomer.

The protein localises to the secreted. It catalyses the reaction Hydrolysis of (1-&gt;4)-beta-linkages between N-acetylmuramic acid and N-acetyl-D-glucosamine residues in a peptidoglycan and between N-acetyl-D-glucosamine residues in chitodextrins.. In terms of biological role, lysozymes have primarily a bacteriolytic function; those in tissues and body fluids are associated with the monocyte-macrophage system and enhance the activity of immunoagents. The polypeptide is Lysozyme C (LYZ) (Lophura leucomelanos (Kalij pheasant)).